The primary structure comprises 293 residues: Proline iminopeptidase (293 aa).

An AB hydrolase-1 domain is found at 28–277 (PLVLLHGGPG…NCSHMSFVQK (250 aa)). The Nucleophile role is filled by serine 105. Aspartate 244 is an active-site residue. The active-site Proton donor is histidine 271.

Belongs to the peptidase S33 family.

The protein localises to the cell envelope. It carries out the reaction Release of N-terminal proline from a peptide.. Functionally, releases the N-terminal proline from various substrates. The polypeptide is Proline iminopeptidase (Lactobacillus acidophilus (strain ATCC 700396 / NCK56 / N2 / NCFM)).